A 42-amino-acid chain; its full sequence is Large ribosomal subunit protein bL36 (42 aa).

The protein belongs to the bacterial ribosomal protein bL36 family.

In Ehrlichia chaffeensis (strain ATCC CRL-10679 / Arkansas), this protein is Large ribosomal subunit protein bL36.